The sequence spans 330 residues: Lymphocyte-specific protein 1 (330 aa).

2 stretches are compositionally biased toward basic and acidic residues: residues 1 to 20 (MAEAAIDPRCEEQEELHAED) and 37 to 62 (AREQRQRERERQLQDQDKDKEDDGGH). Disordered regions lie at residues 1 to 246 (MAEA…SIEL) and 281 to 302 (DMSKKSLWEQKGGSKISSTIKS). Positions 66–77 (QPGQQTLISLKS) are enriched in polar residues. Phosphoserine; by CK2 is present on residues Ser-77 and Ser-78. The segment covering 113–135 (QSERPEEKQTEESSHQAKVHLEE) has biased composition (basic and acidic residues). Thr-166 carries the phosphothreonine modification. Residues Ser-168, Ser-179, Ser-180, and Ser-184 each carry the phosphoserine modification. 2 stretches are compositionally biased toward polar residues: residues 206–215 (VKKSQPTLPI) and 223–242 (QQYTQATESSGRTPKLSRQP). Position 243 is a phosphoserine; by MAPKAPK2 (Ser-243). A compositionally biased stretch (low complexity) spans 291-302 (KGGSKISSTIKS). Lys-318 carries the post-translational modification N6-acetyllysine.

Phosphorylated by casein kinase II, protein kinase C and MAPKAPK2. Phosphorylation by PKC induces translocation from membrane to cytoplasm. Phosphorylation by MAPKAPK2 may regulate neutrophil chemotaxis. In terms of tissue distribution, isoform 1 is expressed in normal mouse B and T-lymphocytes and in transformed B-cells but not (or in smaller amounts) in nine T-lymphoma lines tested. Isoform 2 is expressed in non-lymphoid cell lines (myocytes, stromal cells, fibroblasts).

Its subcellular location is the cell membrane. Functionally, may play a role in mediating neutrophil activation and chemotaxis. The protein is Lymphocyte-specific protein 1 (Lsp1) of Mus musculus (Mouse).